The following is a 424-amino-acid chain: Neurotensin receptor type 1 (424 aa).

The Extracellular portion of the chain corresponds to M1–T67. Residues N4, N38, and N42 are each glycosylated (N-linked (GlcNAc...) asparagine). A helical transmembrane segment spans residues A68–L88. The Cytoplasmic portion of the chain corresponds to A89–H102. Residues Y103–V122 form a helical membrane-spanning segment. The Extracellular segment spans residues E123–R142. A disulfide bond links C141 and C224. The chain crosses the membrane as a helical span at residues G143 to V164. The Cytoplasmic portion of the chain corresponds to E165–R184. A helical transmembrane segment spans residues T185–F205. Over T206–K234 the chain is Extracellular. Residue N211 is glycosylated (N-linked (GlcNAc...) asparagine). A helical transmembrane segment spans residues V235–I259. The Cytoplasmic portion of the chain corresponds to A260–L308. A helical transmembrane segment spans residues V309–M330. A neurotensin binding region spans residues V326–Y349. Residues F331–H348 are Extracellular-facing. The chain crosses the membrane as a helical span at residues Y349–Y369. Over N370 to Y424 the chain is Cytoplasmic. Residues C386 and C388 are each lipidated (S-palmitoyl cysteine). Residues R398–Y424 are disordered. The segment covering R403–Y424 has biased composition (polar residues).

Belongs to the G-protein coupled receptor 1 family. Neurotensin receptor subfamily. NTSR1 sub-subfamily. As to quaternary structure, interacts (palmitoylated form) with GNA11. Post-translationally, N-glycosylated. Palmitoylated; this is required for normal localization at membrane rafts and normal GNA11-mediated activation of down-stream signaling cascades. The palmitoylation level increases in response to neurotensin treatment.

It is found in the cell membrane. The protein resides in the membrane raft. G-protein coupled receptor for the tridecapeptide neurotensin (NTS). Signaling is effected via G proteins that activate a phosphatidylinositol-calcium second messenger system. Signaling leads to the activation of downstream MAP kinases and protects cells against apoptosis. The protein is Neurotensin receptor type 1 (Ntsr1) of Mus musculus (Mouse).